The chain runs to 204 residues: Recombination protein RecR (204 aa).

The segment at 63–78 (CRRCFNITVGELCAIC) adopts a C4-type zinc-finger fold. One can recognise a Toprim domain in the interval 86 to 181 (TKICVVEEPL…RVTRPARGLP (96 aa)).

The protein belongs to the RecR family.

Its function is as follows. May play a role in DNA repair. It seems to be involved in an RecBC-independent recombinational process of DNA repair. It may act with RecF and RecO. In Chloroflexus aurantiacus (strain ATCC 29366 / DSM 635 / J-10-fl), this protein is Recombination protein RecR.